The sequence spans 334 residues: Protein-methionine-sulfoxide reductase catalytic subunit MsrP (334 aa).

Positions 1-44 form a signal peptide, tat-type signal; the sequence is MKAVNPLTENDVTPESLFNARRRTVLKMLGMSAAALSLPGAARA. Mo-molybdopterin-binding positions include Asn88, 91 to 92, Cys146, Thr181, Asn233, Arg238, and 249 to 251; these read YE and GIK.

This sequence belongs to the MsrP family. Heterodimer of a catalytic subunit (MsrP) and a heme-binding subunit (MsrQ). Mo-molybdopterin serves as cofactor. In terms of processing, predicted to be exported by the Tat system. The position of the signal peptide cleavage has not been experimentally proven.

The protein localises to the periplasm. The catalysed reaction is L-methionyl-[protein] + a quinone + H2O = L-methionyl-(S)-S-oxide-[protein] + a quinol. It carries out the reaction L-methionyl-[protein] + a quinone + H2O = L-methionyl-(R)-S-oxide-[protein] + a quinol. In terms of biological role, part of the MsrPQ system that repairs oxidized periplasmic proteins containing methionine sulfoxide residues (Met-O), using respiratory chain electrons. Thus protects these proteins from oxidative-stress damage caused by reactive species of oxygen and chlorine generated by the host defense mechanisms. MsrPQ is essential for the maintenance of envelope integrity under bleach stress, rescuing a wide series of structurally unrelated periplasmic proteins from methionine oxidation. The catalytic subunit MsrP is non-stereospecific, being able to reduce both (R-) and (S-) diastereoisomers of methionine sulfoxide. The polypeptide is Protein-methionine-sulfoxide reductase catalytic subunit MsrP (Erwinia tasmaniensis (strain DSM 17950 / CFBP 7177 / CIP 109463 / NCPPB 4357 / Et1/99)).